Consider the following 976-residue polypeptide: LRR receptor-like serine/threonine-protein kinase ERECTA (976 aa).

The N-terminal stretch at 1 to 24 is a signal peptide; sequence MALFRDIVLLGFLFCLSLVATVTS. Over 25 to 580 the chain is Extracellular; that stretch reads EEGATLLEIK…RRTVRVSISR (556 aa). N-linked (GlcNAc...) asparagine glycans are attached at residues asparagine 65 and asparagine 74. LRR repeat units follow at residues 69 to 92, 93 to 115, 117 to 140, 141 to 163, 165 to 187, 189 to 212, 213 to 235, 237 to 259, 260 to 282, 284 to 306, 308 to 330, 332 to 355, 356 to 379, 380 to 401, 404 to 425, 428 to 449, 452 to 473, 476 to 498, 500 to 522, and 523 to 545; these read NVVALNLSDLNLDGEISPAIGDLK, SLLSIDLRGNRLSGQIPDEIGDC, SLQNLDLSFNELSGDIPFSISKLK, QLEQLILKNNQLIGPIPSTLSQI, NLKILDLAQNKLSGEIPRLIYWN, VLQYLGLRGNNLVGNISPDLCQLT, GLWYFDVRNNSLTGSIPETIGNC, AFQVLDLSYNQLTGEIPFDIGFL, QVATLSLQGNQLSGKIPSVIGLM, ALAVLDLSGNLLSGSIPPILGNL, FTEKLYLHSNKLTGSIPPELGNM, KLHYLELNDNHLTGHIPPELGKLT, DLFDLNVANNDLEGPIPDHLSSCT, NLNSLNVHGNKFSGTIPRAFQK, SMTYLNLSSNNIKGPIPVELSR, NLDTLDLSNNKINGIIPSSLGD, HLLKMNLSRNHITGVVPGDFGN, SIMEIDLSNNDISGPIPEELNQL, NIILLRLENNNLTGNVGSLANCL, and SLTVLNVSHNNLVGDIPKNNNFS. N-linked (GlcNAc...) asparagine glycosylation is found at asparagine 221 and asparagine 234. N-linked (GlcNAc...) asparagine glycosylation is found at asparagine 305 and asparagine 329. A glycan (N-linked (GlcNAc...) asparagine) is linked at asparagine 409. The N-linked (GlcNAc...) asparagine glycan is linked to asparagine 457. 3 N-linked (GlcNAc...) asparagine glycosylation sites follow: asparagine 510, asparagine 528, and asparagine 543. Residues 581 to 601 traverse the membrane as a helical segment; that stretch reads AAILGIAIGGLVILLMVLIAA. The Cytoplasmic portion of the chain corresponds to 602-976; the sequence is CRPHNPPPFL…FGQVISQNSE (375 aa). The residue at position 645 (threonine 645) is a Phosphothreonine. One can recognise a Protein kinase domain in the interval 648–918; sequence LSEKYIIGHG…QVTRVLGSFM (271 aa). ATP-binding positions include 654–662 and lysine 676; that span reads IGHGASSTV. Phosphotyrosine is present on residues tyrosine 721 and tyrosine 760. Aspartate 773 acts as the Proton acceptor in catalysis. Residue tyrosine 815 is modified to Phosphotyrosine. Position 823 is a phosphothreonine (threonine 823).

It belongs to the protein kinase superfamily. Ser/Thr protein kinase family. In terms of assembly, homodimer and heterodimer with ERL1 and TMM. Interacts with EPF1, EPF2, EPFL4, EPFL5 and EPFL6. Interacts with SERK1, SERK2, SERK3/BAK1 and SERK4 in a EPF2-induced manner. Interacts with EPFL9/STOMAGEN. As to expression, mostly expressed in shoot apical meristems (SAM), organ primordia, flowers, siliques and young rosette leaves, and, to a lower extent, in stems and cauline leaves. Expressed in growing inflorescence stems and pedicels. Detected in epidermis, phloem and xylem.

The protein localises to the cell membrane. The enzyme catalyses L-seryl-[protein] + ATP = O-phospho-L-seryl-[protein] + ADP + H(+). It catalyses the reaction L-threonyl-[protein] + ATP = O-phospho-L-threonyl-[protein] + ADP + H(+). Receptor kinase that, together with ERL1 and ERL2, regulates aerial architecture, including inflorescence (e.g. shoot apical meristem-originating organ shape, elongation of the internode and pedicels, and adaxial-abaxial polarity), and stomatal patterning (e.g. density and clustering), probably by tuning cell division and expansion. Redundantly involved with ERL1 in procambial development regulation. Forms a functional ligand-receptor pair with EPF2 (AC Q8LC53). Modulates plant transpiration efficiency by controlling stomatal density, leaf photosynthetic capacity, epidermal cell expansion, mesophyll cell proliferation and cell-cell contact. A phloem-specific expression of ER is sufficient for proper inflorescence architecture. Probable major trait regulating canalization (maintenance of phenotype despite varying environment) in many aspect of the plant physiology (e.g. plant morphology, light-dependent leaves number, branch number, flowering time, phytate and mineral concentrations) by transducing microenvironmental variation into phenotypic differentiation (ecological amplifier). May maintain development integrity in heat stress conditions. Regulates cell wall composition and structure. Confers resistance to the pathogenic bacteria Ralstonia solanacearum and to the necrotrophic fungi Plectosphaerella cucumerina and Pythium irregulare, and required for callose deposition upon infection. Resistance to P.cucumerina seems cell wall-mediated. Forms a constitutive complex with TMM involved in the recognition of the stomatal regulatory peptides EPF1, EPF2 and EPFL9/STOMAGEN. In Arabidopsis thaliana (Mouse-ear cress), this protein is LRR receptor-like serine/threonine-protein kinase ERECTA.